We begin with the raw amino-acid sequence, 1130 residues long: BTB/POZ domain-containing protein 7 (1130 aa).

Polar residues predominate over residues 1 to 10 (MGANASNYPH). Residues 1–24 (MGANASNYPHSCSPRVGGNSQAQQ) are disordered. Residue Gly2 is the site of N-myristoyl glycine attachment. BTB domains lie at 142–211 (TDVD…GMED) and 247–341 (YDVV…DLSV). A BACK domain is found at 413–479 (YGSKWVHRQA…WGEHQLMKRI (67 aa)). Ser722 carries the phosphoserine modification. Disordered regions lie at residues 898-1050 (SEAG…PAHV) and 1062-1130 (FGLT…KSAL). 2 stretches are compositionally biased toward basic and acidic residues: residues 923–935 (PTLE…RENQ) and 996–1005 (KKQEDPRREY). Ser1008 is modified (phosphoserine). Positions 1063–1075 (GLTSNRPPSHSAC) are enriched in polar residues. Composition is skewed to basic and acidic residues over residues 1080–1090 (LEERSSRRLTD) and 1101–1112 (RNADLERGDSIS).

Specifically expressed in embryonic epithelia.

It localises to the nucleus. In terms of biological role, acts as a mediator of epithelial dynamics and organ branching by promoting cleft progression. Induced following accumulation of fibronectin in forming clefts, leading to local expression of the cell-scattering SNAIL2 and suppression of E-cadherin levels, thereby altering cell morphology and reducing cell-cell adhesion. This stimulates cell separation at the base of forming clefts by local, dynamic intercellular gap formation and promotes cleft progression. The sequence is that of BTB/POZ domain-containing protein 7 (Btbd7) from Mus musculus (Mouse).